Consider the following 373-residue polypeptide: Putative gustatory receptor 10b (373 aa).

Residues 1–8 are Cytoplasmic-facing; it reads MRVGKLCR. A helical membrane pass occupies residues 9–29; sequence LALRFWMGLILVLGFSSHYYN. At 30-82 the chain is on the extracellular side; the sequence is PTRRRLVYSRILQTYDWLLMVINLGAFYLYYRYAMTYFLEGMFRRQGFVNQVS. A helical transmembrane segment spans residues 83–103; sequence TCNVFQQLLMAVTGTWLHFLF. Over 104 to 132 the chain is Cytoplasmic; sequence ERHVCQTYNELSRILKHDLKLKEHSRFYC. The chain crosses the membrane as a helical span at residues 133–153; it reads LAFLAKVYNFFHNFNFALSAI. At 154-170 the chain is on the extracellular side; sequence MHWGLRPFNVWDLLANL. A helical transmembrane segment spans residues 171–191; the sequence is YFVYNSLARDAILVAYVLLLL. Residues 192–230 lie on the Cytoplasmic side of the membrane; the sequence is NLSEALRLNGQQEHDTYSDLMKQLRRRERLLRIGRRVHR. A helical transmembrane segment spans residues 231–251; the sequence is MFAWLVAIALIYLVFFNTATI. Residues 252 to 273 lie on the Extracellular side of the membrane; the sequence is YLGYTMFIQKHDALGLRGRGLK. Residues 274-294 form a helical membrane-spanning segment; sequence MLLTVVSFLVILWDVVLLQVI. Residues 295–350 are Cytoplasmic-facing; it reads CEKLLAEENKICDCPEDVASSRTTYRQWEMSALRRAITRSSPENNVLGMFRMDMRC. The helical transmembrane segment at 351–371 threads the bilayer; that stretch reads AFALISCSLSYGIIIIQIGYI. Residues 372–373 lie on the Extracellular side of the membrane; sequence PG.

The protein belongs to the insect chemoreceptor superfamily. Gustatory receptor (GR) family. Gr10a subfamily.

It localises to the cell membrane. Functionally, probable gustatory receptor which mediates acceptance or avoidance behavior, depending on its substrates. This chain is Putative gustatory receptor 10b (Gr10b), found in Drosophila melanogaster (Fruit fly).